The primary structure comprises 406 residues: Probable peptidoglycan glycosyltransferase FtsW (406 aa).

The next 9 helical transmembrane spans lie at Leu-22–Ala-42, Phe-56–Leu-76, Trp-86–Ile-106, Trp-116–Val-136, Leu-153–Glu-173, Val-186–Met-206, Ile-280–Met-300, Phe-318–Val-338, and Leu-352–Val-372. Over residues Ser-383–Glu-397 the composition is skewed to basic and acidic residues. The segment at Ser-383–Ala-406 is disordered.

The protein belongs to the SEDS family. FtsW subfamily.

It is found in the cell inner membrane. The enzyme catalyses [GlcNAc-(1-&gt;4)-Mur2Ac(oyl-L-Ala-gamma-D-Glu-L-Lys-D-Ala-D-Ala)](n)-di-trans,octa-cis-undecaprenyl diphosphate + beta-D-GlcNAc-(1-&gt;4)-Mur2Ac(oyl-L-Ala-gamma-D-Glu-L-Lys-D-Ala-D-Ala)-di-trans,octa-cis-undecaprenyl diphosphate = [GlcNAc-(1-&gt;4)-Mur2Ac(oyl-L-Ala-gamma-D-Glu-L-Lys-D-Ala-D-Ala)](n+1)-di-trans,octa-cis-undecaprenyl diphosphate + di-trans,octa-cis-undecaprenyl diphosphate + H(+). It functions in the pathway cell wall biogenesis; peptidoglycan biosynthesis. Peptidoglycan polymerase that is essential for cell division. The polypeptide is Probable peptidoglycan glycosyltransferase FtsW (Marinomonas mediterranea (strain ATCC 700492 / JCM 21426 / NBRC 103028 / MMB-1)).